The chain runs to 735 residues: DNA replication licensing factor mcm5-A (735 aa).

In terms of domain architecture, MCM spans 332 to 538 (IYETVAKSIA…RDMTLAKHVM (207 aa)). Arg-372 contacts ADP. The Arginine finger signature appears at 513–516 (SRFD).

The protein belongs to the MCM family. Component of the mcm2-7 complex (RLF-M). The complex forms a toroidal hexameric ring with the proposed subunit order mcm2-mcm6-mcm4-mcm7-mcm3-mcm5. The heterodimer of mmcm3/mcm5 interacts with mcm4, mmcm6, mcm7 and weakly with mcm2. Component of the CMG helicase complex, composed of the mcm2-7 complex, the GINS complex and cdc45.

It is found in the nucleus. The protein localises to the chromosome. It carries out the reaction ATP + H2O = ADP + phosphate + H(+). In terms of biological role, acts as a component of the MCM2-7 complex (MCM complex) which is the replicative helicase essential for 'once per cell cycle' DNA replication initiation and elongation in eukaryotic cells. Core component of CDC45-MCM-GINS (CMG) helicase, the molecular machine that unwinds template DNA during replication, and around which the replisome is built. The active ATPase sites in the MCM2-7 ring are formed through the interaction surfaces of two neighboring subunits such that a critical structure of a conserved arginine finger motif is provided in trans relative to the ATP-binding site of the Walker A box of the adjacent subunit. The six ATPase active sites, however, are likely to contribute differentially to the complex helicase activity. This is DNA replication licensing factor mcm5-A (mcm5-a) from Xenopus laevis (African clawed frog).